The following is an 880-amino-acid chain: Valine--tRNA ligase (880 aa).

The 'HIGH' region signature appears at proline 48 to histidine 58. The 'KMSKS' region signature appears at lysine 524–serine 528. Lysine 527 is a binding site for ATP. Residues leucine 808 to serine 879 adopt a coiled-coil conformation.

It belongs to the class-I aminoacyl-tRNA synthetase family. ValS type 1 subfamily. As to quaternary structure, monomer.

The protein resides in the cytoplasm. The enzyme catalyses tRNA(Val) + L-valine + ATP = L-valyl-tRNA(Val) + AMP + diphosphate. In terms of biological role, catalyzes the attachment of valine to tRNA(Val). As ValRS can inadvertently accommodate and process structurally similar amino acids such as threonine, to avoid such errors, it has a 'posttransfer' editing activity that hydrolyzes mischarged Thr-tRNA(Val) in a tRNA-dependent manner. The polypeptide is Valine--tRNA ligase (Enterococcus faecalis (strain ATCC 700802 / V583)).